The following is a 1363-amino-acid chain: Xanthine dehydrogenase (1363 aa).

The 2Fe-2S ferredoxin-type domain occupies 35-121; that stretch reads DTIRFYLNGT…GKHVITVEGI (87 aa). 8 residues coordinate [2Fe-2S] cluster: cysteine 73, cysteine 78, cysteine 81, cysteine 103, cysteine 142, cysteine 145, cysteine 177, and cysteine 179. Residues 266–450 enclose the FAD-binding PCMH-type domain; it reads FGNKRKKWYR…SSLRIPTASE (185 aa). Residues 294-301, phenylalanine 374, 384-388, aspartate 397, and lysine 459 each bind FAD; these read LIGGSTET and SPAGN. 2 residues coordinate Mo-molybdopterin: glutamine 798 and phenylalanine 829. 2 residues coordinate substrate: glutamate 833 and arginine 911. Mo-molybdopterin is bound at residue arginine 943. Phenylalanine 945 and threonine 1041 together coordinate substrate. A Mo-molybdopterin-binding site is contributed by alanine 1110. Catalysis depends on glutamate 1295, which acts as the Proton acceptor.

It belongs to the xanthine dehydrogenase family. It depends on FAD as a cofactor. Mo-molybdopterin is required as a cofactor. The cofactor is [2Fe-2S] cluster.

Its subcellular location is the peroxisome. The catalysed reaction is xanthine + NAD(+) + H2O = urate + NADH + H(+). The enzyme catalyses hypoxanthine + NAD(+) + H2O = xanthine + NADH + H(+). Functionally, key enzyme in purine degradation. Catalyzes the oxidation of hypoxanthine to xanthine. Catalyzes the oxidation of xanthine to uric acid. The sequence is that of Xanthine dehydrogenase (hxA) from Emericella nidulans (strain FGSC A4 / ATCC 38163 / CBS 112.46 / NRRL 194 / M139) (Aspergillus nidulans).